A 918-amino-acid polypeptide reads, in one-letter code: Serine/threonine-protein kinase D1 (918 aa).

Position 93 is a phosphotyrosine (Y93). Residues 144–194 (PHALFVHSYRAPAFCDHCGEMLWGLVRQGLKCEGCGLNYHKRCAFKIPNNC) form a Phorbol-ester/DAG-type 1 zinc finger. 4 positions are modified to phosphoserine: S203, S206, S217, and S221. A Phorbol-ester/DAG-type 2 zinc finger spans residues 276 to 326 (PHTFVIHSYTRPTVCQFCKKLLKGLFRQGLQCKDCRFNCHKRCAPKVPNNC). 2 disordered regions span residues 338–362 (SPGAESDVVMEEGSDDNDSERNSGL) and 379–410 (AEGQSGGAEMQDPDADQEDSNRTISPSTSNNI). Over residues 345–355 (VVMEEGSDDND) the composition is skewed to acidic residues. S351 is subject to Phosphoserine. A compositionally biased stretch (polar residues) spans 400–410 (RTISPSTSNNI). Phosphoserine; by MAPK13 is present on residues S403 and S407. One can recognise a PH domain in the interval 428 to 547 (TVMKEGWMVH…WEVAIQHALM (120 aa)). At Y438 the chain carries Phosphotyrosine. S454 is modified (phosphoserine). Y469 is subject to Phosphotyrosine; by ABL. A Phosphotyrosine modification is found at Y508. The residue at position 554 (S554) is a Phosphoserine. One can recognise a Protein kinase domain in the interval 589-845 (IFPDEVLGSG…VDKTLSHPWL (257 aa)). Residues 595-603 (LGSGQFGIV) and K618 each bind ATP. Catalysis depends on D712, which acts as the Proton acceptor. The residue at position 744 (S744) is a Phosphoserine; by PKC/PRKCD. S748 bears the Phosphoserine; by autocatalysis and PKC/PRKCD mark. Y755 bears the Phosphotyrosine mark. S916 carries the post-translational modification Phosphoserine; by autocatalysis.

The protein belongs to the protein kinase superfamily. CAMK Ser/Thr protein kinase family. PKD subfamily. Interacts (via N-terminus) with ADAP1/CENTA1. Interacts with MAPK13. Interacts with DAPK1 in an oxidative stress-regulated manner. Interacts with USP28; the interaction induces phosphorylation of USP28 and activated KRAS-mediated stabilization of ZNF304. Interacts with AKAP13 (via C-terminal domain). The cofactor is Mg(2+). Phosphorylated at Ser-403 and Ser-407 by MAPK13 during regulation of insulin secretion in pancreatic beta cells. Phosphorylated by DAPK1. Phosphorylated at Tyr-93 and by ABL at Tyr-469, which primes the kinase in response to oxidative stress, and promotes a second step activating phosphorylation at Ser-744/Ser-748 by PKRD. Phosphorylated at Ser-916 upon S.enterica infection in macrophages.

It localises to the cytoplasm. The protein localises to the cell membrane. The protein resides in the golgi apparatus. Its subcellular location is the trans-Golgi network. The enzyme catalyses L-seryl-[protein] + ATP = O-phospho-L-seryl-[protein] + ADP + H(+). The catalysed reaction is L-threonyl-[protein] + ATP = O-phospho-L-threonyl-[protein] + ADP + H(+). Its activity is regulated as follows. Activated by DAG and phorbol esters. Phorbol-ester/DAG-type domain 1 binds DAG with high affinity and appears to play the dominant role in mediating translocation to the cell membrane and trans-Golgi network. Phorbol-ester/DAG-type domain 2 binds phorbol ester with higher affinity. Autophosphorylation of Ser-748 and phosphorylation of Ser-744 by PKC relieves auto-inhibition by the PH domain. Phosphorylation on Tyr-469 by the SRC-ABL1 pathway in response to oxidative stress, is also required for activation. Activated by DAPK1 under oxidative stress. Functionally, serine/threonine-protein kinase that converts transient diacylglycerol (DAG) signals into prolonged physiological effects downstream of PKC, and is involved in the regulation of MAPK8/JNK1 and Ras signaling, Golgi membrane integrity and trafficking, cell survival through NF-kappa-B activation, cell migration, cell differentiation by mediating HDAC7 nuclear export, cell proliferation via MAPK1/3 (ERK1/2) signaling, and plays a role in cardiac hypertrophy, VEGFA-induced angiogenesis, genotoxic-induced apoptosis and flagellin-stimulated inflammatory response. Phosphorylates the epidermal growth factor receptor (EGFR) on dual threonine residues, which leads to the suppression of epidermal growth factor (EGF)-induced MAPK8/JNK1 activation and subsequent JUN phosphorylation. Phosphorylates RIN1, inducing RIN1 binding to 14-3-3 proteins YWHAB, YWHAE and YWHAZ and increased competition with RAF1 for binding to GTP-bound form of Ras proteins (NRAS, HRAS and KRAS). Acts downstream of the heterotrimeric G-protein beta/gamma-subunit complex to maintain the structural integrity of the Golgi membranes, and is required for protein transport along the secretory pathway. In the trans-Golgi network (TGN), regulates the fission of transport vesicles that are on their way to the plasma membrane. May act by activating the lipid kinase phosphatidylinositol 4-kinase beta (PI4KB) at the TGN for the local synthesis of phosphorylated inositol lipids, which induces a sequential production of DAG, phosphatidic acid (PA) and lyso-PA (LPA) that are necessary for membrane fission and generation of specific transport carriers to the cell surface. Under oxidative stress, is phosphorylated at Tyr-469 via SRC-ABL1 and contributes to cell survival by activating IKK complex and subsequent nuclear translocation and activation of NFKB1. Involved in cell migration by regulating integrin alpha-5/beta-3 recycling and promoting its recruitment in newly forming focal adhesion. In osteoblast differentiation, mediates the bone morphogenetic protein 2 (BMP2)-induced nuclear export of HDAC7, which results in the inhibition of HDAC7 transcriptional repression of RUNX2. In neurons, plays an important role in neuronal polarity by regulating the biogenesis of TGN-derived dendritic vesicles, and is involved in the maintenance of dendritic arborization and Golgi structure in hippocampal cells. May potentiate mitogenesis induced by the neuropeptide bombesin or vasopressin by mediating an increase in the duration of MAPK1/3 (ERK1/2) signaling, which leads to accumulation of immediate-early gene products including FOS that stimulate cell cycle progression. Plays an important role in the proliferative response induced by low calcium in keratinocytes, through sustained activation of MAPK1/3 (ERK1/2) pathway. Downstream of novel PKC signaling, plays a role in cardiac hypertrophy by phosphorylating HDAC5, which in turn triggers XPO1/CRM1-dependent nuclear export of HDAC5, MEF2A transcriptional activation and induction of downstream target genes that promote myocyte hypertrophy and pathological cardiac remodeling. Mediates cardiac troponin I (TNNI3) phosphorylation at the PKA sites, which results in reduced myofilament calcium sensitivity, and accelerated crossbridge cycling kinetics. The PRKD1-HDAC5 pathway is also involved in angiogenesis by mediating VEGFA-induced specific subset of gene expression, cell migration, and tube formation. In response to VEGFA, is necessary and required for HDAC7 phosphorylation which induces HDAC7 nuclear export and endothelial cell proliferation and migration. During apoptosis induced by cytarabine and other genotoxic agents, PRKD1 is cleaved by caspase-3 at Asp-378, resulting in activation of its kinase function and increased sensitivity of cells to the cytotoxic effects of genotoxic agents. In epithelial cells, is required for transducing flagellin-stimulated inflammatory responses by binding and phosphorylating TLR5, which contributes to MAPK14/p38 activation and production of inflammatory cytokines. Acts as an activator of NLRP3 inflammasome assembly by mediating phosphorylation of NLRP3. May play a role in inflammatory response by mediating activation of NF-kappa-B. May be involved in pain transmission by directly modulating TRPV1 receptor. Plays a role in activated KRAS-mediated stabilization of ZNF304 in colorectal cancer (CRC) cells. Regulates nuclear translocation of transcription factor TFEB in macrophages upon live S.enterica infection. This is Serine/threonine-protein kinase D1 (Prkd1) from Mus musculus (Mouse).